A 537-amino-acid polypeptide reads, in one-letter code: Mitochondrial distribution and morphology protein 34 (537 aa).

The region spanning 1–195 is the SMP-LTD domain; it reads MAFNFNWSPL…LPAIIHRLSL (195 aa). Disordered stretches follow at residues 320–339, 348–403, 421–493, and 516–537; these read YTFSDNGSQDQGSLPSRPSL, GLSL…IMPH, GRSP…DTSS, and KNGNPTFWDDQDDTPPPAYEAR. Basic residues predominate over residues 355–371; the sequence is RHSKAGRKKKTRVVNLR. Over residues 378–391 the composition is skewed to acidic residues; that stretch reads ANSEEEEDTPETDS. A compositionally biased stretch (polar residues) spans 425 to 441; sequence DLQQQPRRPSFRAQATN.

It belongs to the MDM34 family. In terms of assembly, component of the ER-mitochondria encounter structure (ERMES) or MDM complex, composed of MMM1, MDM10, MDM12 and MDM34.

It localises to the mitochondrion outer membrane. Component of the ERMES/MDM complex, which serves as a molecular tether to connect the endoplasmic reticulum (ER) and mitochondria. Components of this complex are involved in the control of mitochondrial shape and protein biogenesis, and function in nonvesicular lipid trafficking between the ER and mitochondria. MDM34 is required for the interaction of the ER-resident membrane protein MMM1 and the outer mitochondrial membrane-resident beta-barrel protein MDM10. This is Mitochondrial distribution and morphology protein 34 from Chaetomium globosum (strain ATCC 6205 / CBS 148.51 / DSM 1962 / NBRC 6347 / NRRL 1970) (Soil fungus).